The primary structure comprises 123 residues: Large ribosomal subunit protein uL18 (123 aa).

This sequence belongs to the universal ribosomal protein uL18 family. As to quaternary structure, part of the 50S ribosomal subunit; part of the 5S rRNA/L5/L18/L25 subcomplex. Contacts the 5S and 23S rRNAs.

In terms of biological role, this is one of the proteins that bind and probably mediate the attachment of the 5S RNA into the large ribosomal subunit, where it forms part of the central protuberance. The sequence is that of Large ribosomal subunit protein uL18 from Chlamydia felis (strain Fe/C-56) (Chlamydophila felis).